A 280-amino-acid polypeptide reads, in one-letter code: MGNLKSLVLLALLFSFSVAVFANTSNDATHDEVKPSTEATHAIEAQKHDGKPQIAEAQVEANDPVVEPQQDWGGRGGCRWGCCGGWWRGRCRYCCRSQAEASEVVETVEPNDVEPQQGGRGGGGGGGGGRGGCRWGCCGGWWRGRCRYCCRSQAEASEVVETVEPNDVEPQQGGRGGGGGGGGGRGGCRWGCCGGWWRGRCRYCCRSQAEASEVVETVEPNDVEPQQGGRGGGGGGGGGRGGCRWGCCGGWWRGRCRYCCRSQAEANEVVETVEAQQAKP.

The N-terminal stretch at 1-22 is a signal peptide; sequence MGNLKSLVLLALLFSFSVAVFA. Asn23 carries N-linked (GlcNAc...) asparagine glycosylation. Tandem repeats lie at residues 76 to 97 and 131 to 152. A 4 X 22 AA repeats, Cys-rich region spans residues 76-262; that stretch reads GGCRWGCCGG…RGRCRYCCRS (187 aa). The segment at 163–184 is disordered; it reads VEPNDVEPQQGGRGGGGGGGGG. The span at 173-184 shows a compositional bias: gly residues; the sequence is GGRGGGGGGGGG. Repeat unit 3 spans residues 186 to 207; sequence GGCRWGCCGGWWRGRCRYCCRS. The disordered stretch occupies residues 218 to 239; it reads VEPNDVEPQQGGRGGGGGGGGG. Over residues 228-239 the composition is skewed to gly residues; the sequence is GGRGGGGGGGGG. Repeat 4 spans residues 241 to 262; it reads GGCRWGCCGGWWRGRCRYCCRS.

In terms of biological role, may be involved in the acquisition of desiccation tolerance during late phase of embryogenesis. This chain is Late embryogenesis abundant protein M17, found in Arabidopsis thaliana (Mouse-ear cress).